A 69-amino-acid polypeptide reads, in one-letter code: DNA-directed RNA polymerase subunit omega (69 aa).

This sequence belongs to the RNA polymerase subunit omega family. The RNAP catalytic core consists of 2 alpha, 1 beta, 1 beta' and 1 omega subunit. When a sigma factor is associated with the core the holoenzyme is formed, which can initiate transcription.

The catalysed reaction is RNA(n) + a ribonucleoside 5'-triphosphate = RNA(n+1) + diphosphate. Promotes RNA polymerase assembly. Latches the N- and C-terminal regions of the beta' subunit thereby facilitating its interaction with the beta and alpha subunits. This chain is DNA-directed RNA polymerase subunit omega, found in Geobacter metallireducens (strain ATCC 53774 / DSM 7210 / GS-15).